The sequence spans 658 residues: Endoplasmic reticulum mannosyl-oligosaccharide 1,2-alpha-mannosidase (658 aa).

Residues 1 to 50 (MYPPPAPPPAPHRDFISVTLSLGESYDNSKSRRRRSCWRKWKQLSRLQRN) lie on the Cytoplasmic side of the membrane. A helical; Signal-anchor for type II membrane protein transmembrane segment spans residues 51 to 71 (VILFVLGFLILCGFLYSLHTA). At 72-658 (DQWKALSGRP…AHPLPIWAPA (587 aa)) the chain is on the lumenal side. The residue at position 102 (Ser-102) is a Phosphoserine. A disordered region spans residues 123–142 (GPPHLQIRPPNTVSKDGMQD). Glu-289 serves as the catalytic Proton donor. The active site involves Asp-422. Cys-486 and Cys-515 are disulfide-bonded. The active-site Proton donor is Glu-529. Residue Glu-558 is part of the active site. Residue Thr-647 coordinates Ca(2+).

The protein belongs to the glycosyl hydrolase 47 family. Ca(2+) serves as cofactor.

The protein localises to the endoplasmic reticulum membrane. The catalysed reaction is N(4)-(alpha-D-Man-(1-&gt;2)-alpha-D-Man-(1-&gt;2)-alpha-D-Man-(1-&gt;3)-[alpha-D-Man-(1-&gt;2)-alpha-D-Man-(1-&gt;3)-[alpha-D-Man-(1-&gt;2)-alpha-D-Man-(1-&gt;6)]-alpha-D-Man-(1-&gt;6)]-beta-D-Man-(1-&gt;4)-beta-D-GlcNAc-(1-&gt;4)-beta-D-GlcNAc)-L-asparaginyl-[protein] (N-glucan mannose isomer 9A1,2,3B1,2,3) + 4 H2O = N(4)-(alpha-D-Man-(1-&gt;3)-[alpha-D-Man-(1-&gt;3)-[alpha-D-Man-(1-&gt;6)]-alpha-D-Man-(1-&gt;6)]-beta-D-Man-(1-&gt;4)-beta-D-GlcNAc-(1-&gt;4)-beta-D-GlcNAc)-L-asparaginyl-[protein] (N-glucan mannose isomer 5A1,2) + 4 beta-D-mannose. The enzyme catalyses N(4)-(alpha-D-Man-(1-&gt;2)-alpha-D-Man-(1-&gt;2)-alpha-D-Man-(1-&gt;3)-[alpha-D-Man-(1-&gt;3)-[alpha-D-Man-(1-&gt;2)-alpha-D-Man-(1-&gt;6)]-alpha-D-Man-(1-&gt;6)]-beta-D-Man-(1-&gt;4)-beta-D-GlcNAc-(1-&gt;4)-beta-D-GlcNAc)-L-asparaginyl-[protein] (N-glucan mannose isomer 8A1,2,3B1,3) + 3 H2O = N(4)-(alpha-D-Man-(1-&gt;3)-[alpha-D-Man-(1-&gt;3)-[alpha-D-Man-(1-&gt;6)]-alpha-D-Man-(1-&gt;6)]-beta-D-Man-(1-&gt;4)-beta-D-GlcNAc-(1-&gt;4)-beta-D-GlcNAc)-L-asparaginyl-[protein] (N-glucan mannose isomer 5A1,2) + 3 beta-D-mannose. The protein operates within protein modification; protein glycosylation. Its function is as follows. Involved in glycoprotein quality control targeting of misfolded glycoproteins for degradation. It primarily trims a single alpha-1,2-linked mannose residue from Man(9)GlcNAc(2) to produce Man(8)GlcNAc(2), but at high enzyme concentrations, as found in the ER quality control compartment (ERQC), it further trims the carbohydrates to Man(5-6)GlcNAc(2). The polypeptide is Endoplasmic reticulum mannosyl-oligosaccharide 1,2-alpha-mannosidase (Man1b1) (Mus musculus (Mouse)).